Reading from the N-terminus, the 341-residue chain is Processive diacylglycerol beta-glycosyltransferase (341 aa).

This sequence belongs to the glycosyltransferase 2 family. It depends on Mg(2+) as a cofactor.

The protein localises to the cell membrane. The catalysed reaction is a 1,2-diacyl-sn-glycerol + UDP-alpha-D-glucose = a 1,2-diacyl-3-O-(beta-D-glucopyranosyl)-sn-glycerol + UDP + H(+). It carries out the reaction a 1,2-diacyl-sn-glycerol + UDP-alpha-D-galactose = a 1,2-diacyl-3-O-(beta-D-galactosyl)-sn-glycerol + UDP + H(+). The enzyme catalyses a 1,2-diacyl-3-O-(beta-D-galactosyl)-sn-glycerol + UDP-alpha-D-glucose = a 1,2-diacyl-3-O-[beta-D-glucopyranosyl-(1-&gt;6)-beta-D-galactopyranosyl]-sn-glycerol + UDP + H(+). It catalyses the reaction a 1,2-diacyl-3-O-(beta-D-galactosyl)-sn-glycerol + UDP-alpha-D-galactose = a 1,2-diacyl-3-O-[beta-D-galactosyl-(1-&gt;6)-beta-D-galactosyl]-sn-glycerol + UDP + H(+). With respect to regulation, activated by the negatively charged lipid phosphatidylglycerol (PG). Processive glycosyltransferase involved in the biosynthesis of both the non-bilayer-prone beta-monoglycosyldiacylglycerol and the bilayer-forming membrane lipid glucosyl-galactosyldiacylglycerol and digalactosyl-diacylglycerol. These components contribute to regulate the properties and stability of the membrane. Catalyzes sequentially the transfers of glucosyl or galactosyl residues from UDP-Glc or UDP-Gal to diacylglycerol (DAG) acceptor to form the corresponding beta-glycosyl-DAG (3-O-(beta-D-glycopyranosyl)-1,2-diacyl-sn-glycerol). Then, only beta-galactosyl-DAG (3-O-(beta-D-galactopyranosyl)-1,2-diacyl-sn-glycerol) can act as acceptor to give the beta-glycosyl-beta-galactosyl-DAG product (3-O-(beta-D-glycopyranosyl-(1-&gt;6)-D-galactopyranosyl)-1,2-diacyl-sn-glycerol). It can also use alpha-Gal-beta-Gal-DAG, ceramide (Cer) and beta-Gal-Cer as sugar acceptors. The enzyme is supposed to be mainly a galactosyltransferase, with higher glycosyltransferase activity for the addition of the second glycosyl on beta-Gal-DAG as acceptor. The main glycolipid produced in vivo is beta-Glc-beta-Gal-DAG with a beta-1,6 linkage. This chain is Processive diacylglycerol beta-glycosyltransferase, found in Mycoplasma pneumoniae (strain ATCC 29342 / M129 / Subtype 1) (Mycoplasmoides pneumoniae).